Here is a 280-residue protein sequence, read N- to C-terminus: MSLQFTKYQGLGNDFILIDNRNEATPLLTPEQAVDICDRHFGVGADGVIFLLPATGETDYTMRIFNSDGSEPEMCGNGIRCLARFAADLEGHALTATPRYRIHTLAGTITPQVRSDGQVTVDMGQPRLLAGEIPTTLKPAAEKVIAQPLQVGGRSWSVTCVSMGNPHCITFVENVAAIDLHTLGPQFEHHPAFPQRINTEFIEVIRPDYLKMRVWERGAGMTLACGTGACAALVAAVLNDLSEPRATVELPGGPLEIEWSAPGQAVLMTGPAEQVFQGVL.

Asn-13 and Asn-66 together coordinate substrate. Cys-75 (proton donor) is an active-site residue. Substrate is bound by residues 76–77 (GN), Asn-165, Asn-198, and 216–217 (ER). Catalysis depends on Cys-225, which acts as the Proton acceptor. 226–227 (GT) lines the substrate pocket.

Belongs to the diaminopimelate epimerase family. In terms of assembly, homodimer.

The protein localises to the cytoplasm. It catalyses the reaction (2S,6S)-2,6-diaminopimelate = meso-2,6-diaminopimelate. Its pathway is amino-acid biosynthesis; L-lysine biosynthesis via DAP pathway; DL-2,6-diaminopimelate from LL-2,6-diaminopimelate: step 1/1. In terms of biological role, catalyzes the stereoinversion of LL-2,6-diaminopimelate (L,L-DAP) to meso-diaminopimelate (meso-DAP), a precursor of L-lysine and an essential component of the bacterial peptidoglycan. The polypeptide is Diaminopimelate epimerase (Cyanothece sp. (strain PCC 7425 / ATCC 29141)).